A 96-amino-acid polypeptide reads, in one-letter code: Protein Vpr (96 aa).

Residues 1-42 form a homooligomerization region; that stretch reads MEQAPEDQGPQREPHNEWTLELLEEIKNEAVRHFPRVWLHQL. Phosphoserine; by host occurs at positions 79, 94, and 96.

The protein belongs to the HIV-1 VPR protein family. Homooligomer, may form homodimer. Interacts with p6-gag region of the Pr55 Gag precursor protein through a (Leu-X-X)4 motif near the C-terminus of the P6gag protein. Interacts with host UNG. May interact with host RAD23A/HHR23A. Interacts with host VPRBP/DCAF1, leading to hijack the CUL4A-RBX1-DDB1-DCAF1/VPRBP complex, mediating ubiquitination of host proteins such as TERT and ZGPAT and arrest of the cell cycle in G2 phase. Post-translationally, phosphorylated on several residues by host. These phosphorylations regulate VPR activity for the nuclear import of the HIV-1 pre-integration complex.

Its subcellular location is the virion. It localises to the host nucleus. The protein localises to the host extracellular space. During virus replication, may deplete host UNG protein, and incude G2-M cell cycle arrest. Acts by targeting specific host proteins for degradation by the 26S proteasome, through association with the cellular CUL4A-DDB1 E3 ligase complex by direct interaction with host VPRPB/DCAF-1. Cell cycle arrest reportedly occurs within hours of infection and is not blocked by antiviral agents, suggesting that it is initiated by the VPR carried into the virion. Additionally, VPR induces apoptosis in a cell cycle dependent manner suggesting that these two effects are mechanistically linked. Detected in the serum and cerebrospinal fluid of AIDS patient, VPR may also induce cell death to bystander cells. Its function is as follows. During virus entry, plays a role in the transport of the viral pre-integration (PIC) complex to the host nucleus. This function is crucial for viral infection of non-dividing macrophages. May act directly at the nuclear pore complex, by binding nucleoporins phenylalanine-glycine (FG)-repeat regions. In Homo sapiens (Human), this protein is Protein Vpr.